The primary structure comprises 902 residues: 4-hydroxyphenylacetate decarboxylase glycyl radical subunit (902 aa).

One can recognise a PFL domain in the interval 38–774; that stretch reads KRAEDLLDVY…ATLATPDGRL (737 aa). 4-hydroxyphenylacetate-binding residues include Ser348 and Cys507. Cys507 serves as the catalytic Cysteine radical intermediate. The active-site Proton donor is the Glu509. Residues His540 and Glu641 each coordinate 4-hydroxyphenylacetate. Positions 782–902 constitute a Glycine radical domain; it reads GSVSAYAGTD…VIARTEYEGV (121 aa). Position 877 is a glycine radical (Gly877).

Belongs to the glycyl radical enzyme (GRE) family. HPAD subfamily. As to quaternary structure, heterooctamer consisting of 4 large (HpdB) subunits and 4 small (HpdC) subunits. Also forms a catalytically inactive homodimer. Phosphorylated on serine. Phosphorylation may trigger the formation of the active heterooctamers and thereby regulates enzyme activity. Post-translationally, requires the activating protein HpdA to generate the key active site glycyl radical that is involved in catalysis.

The enzyme catalyses 4-hydroxyphenylacetate + H(+) = 4-methylphenol + CO2. It catalyses the reaction 3,4-dihydroxyphenylacetate + H(+) = 4-methylcatechol + CO2. The catalysed reaction is 2-hydroxy-2-(4-hydroxyphenyl)acetate + H(+) = 4-hydroxybenzyl alcohol + CO2. Enzyme activity catalyzed by the HPA decarboxylase complex is rapidly and irreversibly inactivated by oxygen. Competitively inhibited by p-hydroxyphenylacetamide. Not inhibited by m- or o-hydroxyphenyl-acetate, p-hydroxybenzoate or p-hydroxyphenylpropionate. Its function is as follows. Glycyl radical subunit of the HPA decarboxylase that decarboxylates phenylacetates with a hydroxyl group in the p-position. Active toward 4-hydroxyphenylacetate, 3,4-dihydroxyphenylacetate and to a lesser extent p-hydroxymandelate (2-hydroxy-2-(4-hydroxyphenyl)acetate), forming 4-methylphenol, 4-methylcatechol and 4-hydroxybenzylalcohol, respectively. Is likely involved in the catabolism of aromatic amino acids such as tyrosine fermentation. 4-methylphenol (p-cresol) formation provides metabolic toxicity, which may benefit the pathogen C.difficile by suppression of the endogenous gastrointestinal microflora, allowing the development of gastrointestinal infections. The large subunit is the catalytic subunit that binds the substrate. This Clostridioides difficile (Peptoclostridium difficile) protein is 4-hydroxyphenylacetate decarboxylase glycyl radical subunit.